Here is a 508-residue protein sequence, read N- to C-terminus: General transcription factor IIF subunit 1 (508 aa).

Alanine 2 is modified (N-acetylalanine). Threonine 156 bears the Phosphothreonine mark. The tract at residues 177–446 (MQQRRLKDQD…TPSSGDVQVT (270 aa)) is disordered. Residues serine 217, serine 218, serine 221, and serine 224 each carry the phosphoserine modification. A compositionally biased stretch (basic residues) spans 232-251 (SKAKKKAPVTKAGRKKKKKK). Acidic residues-rich tracts occupy residues 255 to 270 (DEAFEDSDDGDFEGQE) and 303 to 325 (EQSESSEESEEEKPPEEDKEEEE). The residue at position 331 (threonine 331) is a Phosphothreonine. Over residues 343–355 (DDSDSSEESDIDS) the composition is skewed to acidic residues. Residues 364-374 (AKKKTPPKRER) show a composition bias toward basic residues. 4 positions are modified to phosphoserine: serine 377, serine 380, serine 381, and serine 385. The span at 378 to 388 (GGSSKGTSRPG) shows a compositional bias: polar residues. Threonine 389 is subject to Phosphothreonine. Positions 389–406 (TPSAEAASTSSTLRAAAS) are enriched in low complexity. A Phosphoserine modification is found at serine 391. Lysine 407 carries the N6-acetyllysine modification. Over residues 428–443 (GPQSLSGKSTPSSGDV) the composition is skewed to polar residues. Residues serine 431, serine 433, and serine 436 each carry the phosphoserine modification. The residue at position 437 (threonine 437) is a Phosphothreonine. Residue serine 440 is modified to Phosphoserine.

It belongs to the TFIIF alpha subunit family. As to quaternary structure, heterodimer of an alpha and a beta subunit. Interacts with GTF2F2, CTDP1, TAF6/TAFII80 and URI1. Interacts with GTF2B (via C-terminus and preferentially via acetylated form); this interaction prevents binding of GTF2B to GTF2F2. Part of TBP-based Pol II pre-initiation complex (PIC), in which Pol II core assembles with general transcription factors and other specific initiation factors including GTF2E1, GTF2E2, GTF2F1, GTF2F2, TCEA1, ERCC2, ERCC3, GTF2H2, GTF2H3, GTF2H4, GTF2H5, GTF2A1, GTF2A2, GTF2B and TBP; this large multi-subunit PIC complex mediates DNA unwinding and targets Pol II core to the transcription start site where the first phosphodiester bond forms. In terms of processing, phosphorylated on Ser and other residues by TAF1 and casein kinase II-like kinases.

The protein localises to the nucleus. Its function is as follows. TFIIF is a general transcription initiation factor that binds to RNA polymerase II and helps to recruit it to the initiation complex in collaboration with TFIIB. It promotes transcription elongation. The sequence is that of General transcription factor IIF subunit 1 (Gtf2f1) from Mus musculus (Mouse).